A 490-amino-acid polypeptide reads, in one-letter code: Apocarotenoid-15,15'-oxygenase (490 aa).

Residue H183 coordinates Fe cation. S206 serves as a coordination point for substrate. A Fe cation-binding site is contributed by H238. A substrate-binding site is contributed by F303. Fe cation-binding residues include H304 and H484.

Belongs to the carotenoid oxygenase family. The cofactor is Fe(2+).

It carries out the reaction all-trans-8'-apo-beta-carotenal + O2 = (2E,4E,6E)-2,6-dimethylocta-2,4,6-trienedial + all-trans-retinal. Functionally, cleaves a number of carotenals and carotenols in the all-trans configuration at the 15-15' double bond producing retinal or retinol, respectively. Also shows activity toward lycopenals and the corresponding alcohols. Does not cleave beta-carotene or lycopene. This Synechocystis sp. (strain ATCC 27184 / PCC 6803 / Kazusa) protein is Apocarotenoid-15,15'-oxygenase.